The sequence spans 500 residues: Arabinofuranosidase/B-xylosidase (500 aa).

The signal sequence occupies residues methionine 1–alanine 21. Asparagine 467 is a glycosylation site (N-linked (GlcNAc...) asparagine).

Belongs to the glycosyl hydrolase 54 family.

The catalysed reaction is Hydrolysis of terminal non-reducing alpha-L-arabinofuranoside residues in alpha-L-arabinosides.. It catalyses the reaction Hydrolysis of (1-&gt;4)-beta-D-xylans, to remove successive D-xylose residues from the non-reducing termini.. The sequence is that of Arabinofuranosidase/B-xylosidase (xyl1) from Trichoderma koningii (Hypocrea koningii).